Reading from the N-terminus, the 331-residue chain is 5-dehydro-2-deoxygluconokinase (331 aa).

It belongs to the carbohydrate kinase PfkB family.

The enzyme catalyses 5-dehydro-2-deoxy-D-gluconate + ATP = 6-phospho-5-dehydro-2-deoxy-D-gluconate + ADP + H(+). Its pathway is polyol metabolism; myo-inositol degradation into acetyl-CoA; acetyl-CoA from myo-inositol: step 5/7. In terms of biological role, catalyzes the phosphorylation of 5-dehydro-2-deoxy-D-gluconate (2-deoxy-5-keto-D-gluconate or DKG) to 6-phospho-5-dehydro-2-deoxy-D-gluconate (DKGP). The polypeptide is 5-dehydro-2-deoxygluconokinase (Photobacterium profundum (strain SS9)).